The sequence spans 423 residues: Mannose-6-phosphate isomerase (423 aa).

An N-acetylalanine modification is found at Ala2. Phosphoserine is present on residues Ser102 and Ser108. Zn(2+) contacts are provided by Gln110, His112, Glu137, and His276. Residue Arg295 is part of the active site.

The protein belongs to the mannose-6-phosphate isomerase type 1 family. Zn(2+) serves as cofactor.

Its subcellular location is the cytoplasm. The catalysed reaction is D-mannose 6-phosphate = D-fructose 6-phosphate. It functions in the pathway nucleotide-sugar biosynthesis; GDP-alpha-D-mannose biosynthesis; alpha-D-mannose 1-phosphate from D-fructose 6-phosphate: step 1/2. Functionally, isomerase that catalyzes the interconversion of fructose-6-P and mannose-6-P and has a critical role in the supply of D-mannose derivatives required for many eukaryotic glycosylation reactions. The sequence is that of Mannose-6-phosphate isomerase (MPI) from Pan troglodytes (Chimpanzee).